Reading from the N-terminus, the 315-residue chain is tRNA dimethylallyltransferase (315 aa).

13-20 is an ATP binding site; sequence GPTASGKS. A substrate-binding site is contributed by 15–20; that stretch reads TASGKS. Interaction with substrate tRNA regions lie at residues 38–41 and 162–166; these read DSMQ and QRLAR.

Belongs to the IPP transferase family. As to quaternary structure, monomer. It depends on Mg(2+) as a cofactor.

The enzyme catalyses adenosine(37) in tRNA + dimethylallyl diphosphate = N(6)-dimethylallyladenosine(37) in tRNA + diphosphate. In terms of biological role, catalyzes the transfer of a dimethylallyl group onto the adenine at position 37 in tRNAs that read codons beginning with uridine, leading to the formation of N6-(dimethylallyl)adenosine (i(6)A). This is tRNA dimethylallyltransferase from Paramagnetospirillum magneticum (strain ATCC 700264 / AMB-1) (Magnetospirillum magneticum).